The sequence spans 267 residues: Collectin-11 (267 aa).

Positions 1–21 (MKRALALMGLAFLCVLRAGAA) are cleaved as a signal peptide. Positions 40–109 (GDAGEKGDKG…GPNGEPGIPC (70 aa)) are disordered. Composition is skewed to basic and acidic residues over residues 41–50 (DAGEKGDKGA) and 62–71 (EKGDVGDKGQ). The region spanning 49-108 (GAPGRPGRVGPTGEKGDVGDKGQKGGVGRHGKIGPIGSKGEKGDSGDIGPPGPNGEPGIP) is the Collagen-like domain. Residues 110-144 (ECSQLRKAIGEMDNQVTQLTAELKFIKNAVAGVRE) adopt a coiled-coil conformation. One can recognise a C-type lectin domain in the interval 145–261 (TEQKMYLLVK…CHLTMHFLCE (117 aa)). 2 cysteine pairs are disulfide-bonded: Cys-166–Cys-260 and Cys-238–Cys-252. Arg-196 provides a ligand contact to a carbohydrate. Ca(2+) contacts are provided by Asp-203, Glu-207, Glu-228, Asn-230, Asn-231, Asp-234, Glu-236, and Asp-237. A carbohydrate is bound at residue Glu-236. Residues Glu-240 and 248-250 (NDV) contribute to the a carbohydrate site. Ca(2+) is bound by residues Asn-248 and Asp-249.

The protein belongs to the COLEC10/COLEC11 family. In terms of assembly, homotrimer; disulfide-linked. Interacts with MASP1; probably triggers the lectin pathway of complement.

The protein resides in the secreted. Functionally, lectin that plays a role in innate immunity, apoptosis and embryogenesis. Calcium-dependent lectin that binds self and non-self glycoproteins presenting high mannose oligosaccharides with at least one terminal alpha-1,2-linked mannose epitope. Primarily recognizes the terminal disaccharide of the glycan. Also recognizes a subset of fucosylated glycans and lipopolysaccharides. Plays a role in innate immunity through its ability to bind non-self sugars presented by microorganisms and to activate the complement through the recruitment of MAPS1. Also plays a role in apoptosis through its ability to bind in a calcium-independent manner the DNA present at the surface of apoptotic cells and to activate the complement in response to this binding. Finally, plays a role in development, probably serving as a guidance cue during the migration of neural crest cells and other cell types during embryogenesis. The protein is Collectin-11 (COLEC11) of Bos taurus (Bovine).